The following is a 118-amino-acid chain: Large ribosomal subunit protein bL17 (118 aa).

This sequence belongs to the bacterial ribosomal protein bL17 family. In terms of assembly, part of the 50S ribosomal subunit. Contacts protein L32.

The sequence is that of Large ribosomal subunit protein bL17 from Phytoplasma australiense.